We begin with the raw amino-acid sequence, 203 residues long: Hydra actinoporin-like toxin 2 (203 aa).

The first 21 residues, methionine 1–glycine 21, serve as a signal peptide directing secretion. The Cell attachment site motif lies at arginine 175–glycine 177.

Belongs to the actinoporin family. HALT subfamily. In terms of assembly, octamer or nonamer in membranes. Monomer in the soluble state. In vitro, interacts with folate receptor alpha (of target organism). Strongly expressed in the gland and mucous cells in the endoderm.

It localises to the nematocyst. It is found in the secreted. Its subcellular location is the target cell membrane. Pore-forming protein that forms hydrophilic pores and causes cytolysis. Compared to equinatoxin-2 (AC P61914), it reveals lower cytolysis activity (5-12-fold difference, tested on erythrocytes), a larger pore size (probably 2-3 nm) and different affinity to membrane lipids (100-fold lower affinity to sphingomyelin). Binds to sulfatides (SFT). Shows cytolytic activity on HeLa cells, with a different potency than its paralogs (from most potent to less potent: HALT-4&gt;HALT-6~HALT-1&gt;HALT-3&gt;HALT-7&gt;HALT-2). Pore formation is a multi-step process that involves specific recognition of membrane lipid by a protein aromatic residues rich region, firm binding to the membrane (mainly driven by hydrophobic interactions) accompanied by the transfer of the N-terminal region to the lipid-water interface and finally pore formation after oligomerization of monomers. In vitro, binds to the folate receptor alpha (FOLR1), a GPI-anchored membrane protein that plays a major role in the uptake of folate/folic acid into cells via endocytosis, suggesting a possible involvement of this receptor in the mechanism of HALT-1-induced cell lysis. In vivo, does not cause visible paralysis in larvae of the blowfly Sarcophaga faculata, the most common arthropod prey of Hydra. The sequence is that of Hydra actinoporin-like toxin 2 from Hydra vulgaris (Hydra).